A 773-amino-acid chain; its full sequence is Mitogen-activated protein kinase kinase kinase 9 (773 aa).

Residues 1–14 (MKKSSDKSPVRQHD) show a composition bias toward basic and acidic residues. The segment at 1–35 (MKKSSDKSPVRQHDTATQINSDAVSSSTSFTDSDS) is disordered. Positions 21–35 (SDAVSSSTSFTDSDS) are enriched in low complexity. Residues S79 and S150 each carry the phosphoserine modification. Residues 100–493 (FDKILALMKK…VSNTSPICVS (394 aa)) are regulatory region. S365 carries the phosphoserine; by MAPK4 modification. The segment at 426–455 (EIVRRPSSSSSSENGCDEEEAEDDKVEKEE) is disordered. The span at 440 to 449 (GCDEEEAEDD) shows a compositional bias: acidic residues. The Protein kinase domain occupies 501–755 (WQKGQLLRQG…ATELLNHPFV (255 aa)). Residues 507–515 (LRQGSFGSV) and K529 contribute to the ATP site. The Proton acceptor role is filled by D624. At S768 the chain carries Phosphoserine.

The protein belongs to the protein kinase superfamily. STE Ser/Thr protein kinase family. MAP kinase kinase kinase subfamily. As to quaternary structure, interacts with MPK4. Phosphorylated by MPK4 upon treatment with flg22. Expressed at least in rosette leaves (at protein level).

It catalyses the reaction L-seryl-[protein] + ATP = O-phospho-L-seryl-[protein] + ADP + H(+). It carries out the reaction L-threonyl-[protein] + ATP = O-phospho-L-threonyl-[protein] + ADP + H(+). Functionally, triggers SUMM2-mediated immune responses, including cell death and defense responses. Probably inhibited by the MEKK1-MKK1/ MKK2-MPK4 kinase cascade to adjust plant defense. Seems to contribute in transducing external glutamate (L-Glu) signal that elicits large-scale changes in root architecture. In Arabidopsis thaliana (Mouse-ear cress), this protein is Mitogen-activated protein kinase kinase kinase 9.